The following is a 149-amino-acid chain: uncharacterized protein (149 aa).

This is an uncharacterized protein from Acanthamoeba polyphaga (Amoeba).